Reading from the N-terminus, the 208-residue chain is N-(5'-phosphoribosyl)anthranilate isomerase (208 aa).

Belongs to the TrpF family.

The enzyme catalyses N-(5-phospho-beta-D-ribosyl)anthranilate = 1-(2-carboxyphenylamino)-1-deoxy-D-ribulose 5-phosphate. It functions in the pathway amino-acid biosynthesis; L-tryptophan biosynthesis; L-tryptophan from chorismate: step 3/5. The protein is N-(5'-phosphoribosyl)anthranilate isomerase of Neisseria meningitidis serogroup B (strain ATCC BAA-335 / MC58).